We begin with the raw amino-acid sequence, 313 residues long: Biotin synthase (313 aa).

The Radical SAM core domain occupies 28–258 (NFGNDIELCS…LFPQARLRLS (231 aa)). Residues cysteine 46, cysteine 50, and cysteine 53 each coordinate [4Fe-4S] cluster. Residues cysteine 90, cysteine 121, cysteine 181, and arginine 256 each coordinate [2Fe-2S] cluster.

Belongs to the radical SAM superfamily. Biotin synthase family. Homodimer. The cofactor is [4Fe-4S] cluster. [2Fe-2S] cluster serves as cofactor.

The enzyme catalyses (4R,5S)-dethiobiotin + (sulfur carrier)-SH + 2 reduced [2Fe-2S]-[ferredoxin] + 2 S-adenosyl-L-methionine = (sulfur carrier)-H + biotin + 2 5'-deoxyadenosine + 2 L-methionine + 2 oxidized [2Fe-2S]-[ferredoxin]. It functions in the pathway cofactor biosynthesis; biotin biosynthesis; biotin from 7,8-diaminononanoate: step 2/2. Catalyzes the conversion of dethiobiotin (DTB) to biotin by the insertion of a sulfur atom into dethiobiotin via a radical-based mechanism. In Francisella tularensis subsp. tularensis (strain FSC 198), this protein is Biotin synthase.